The sequence spans 128 residues: Small ribosomal subunit protein uS13 (128 aa).

A disordered region spans residues 98-128; sequence VRGQRTRTNARTRKGPRPRIGVKKKGKQAGS. A compositionally biased stretch (basic residues) spans 101–128; sequence QRTRTNARTRKGPRPRIGVKKKGKQAGS.

Belongs to the universal ribosomal protein uS13 family. Part of the 30S ribosomal subunit. Forms a loose heterodimer with protein S19. Forms two bridges to the 50S subunit in the 70S ribosome.

Its function is as follows. Located at the top of the head of the 30S subunit, it contacts several helices of the 16S rRNA. In the 70S ribosome it contacts the 23S rRNA (bridge B1a) and protein L5 of the 50S subunit (bridge B1b), connecting the 2 subunits; these bridges are implicated in subunit movement. Contacts the tRNAs in the A and P-sites. This chain is Small ribosomal subunit protein uS13, found in Thermomicrobium roseum (strain ATCC 27502 / DSM 5159 / P-2).